We begin with the raw amino-acid sequence, 187 residues long: UPF0301 protein YqgE (187 aa).

Belongs to the UPF0301 (AlgH) family.

The chain is UPF0301 protein YqgE from Salmonella heidelberg (strain SL476).